Consider the following 25-residue polypeptide: Dermaseptin-5.2TR (25 aa).

Position 25 is a valine amide (valine 25).

Expressed by the skin glands.

It is found in the secreted. Functionally, has antimicrobial activity. The protein is Dermaseptin-5.2TR of Phyllomedusa trinitatis (Trinidad leaf frog).